A 211-amino-acid chain; its full sequence is Ribosomal RNA small subunit methyltransferase G (211 aa).

Residues G74, L79, 125–126 (AE), and R140 each bind S-adenosyl-L-methionine.

The protein belongs to the methyltransferase superfamily. RNA methyltransferase RsmG family.

Its subcellular location is the cytoplasm. In terms of biological role, specifically methylates the N7 position of guanine in position 518 of 16S rRNA. In Clavibacter michiganensis subsp. michiganensis (strain NCPPB 382), this protein is Ribosomal RNA small subunit methyltransferase G.